Consider the following 512-residue polypeptide: Acid-sensing ion channel 2 (512 aa).

Residues methionine 1–proline 37 lie on the Cytoplasmic side of the membrane. 2 positions are modified to phosphoserine: serine 8 and serine 11. Residues leucine 38–valine 58 traverse the membrane as a helical segment. The Extracellular segment spans residues glutamate 59–alanine 427. Disulfide bonds link cysteine 92–cysteine 193, cysteine 289–cysteine 364, cysteine 307–cysteine 360, cysteine 311–cysteine 358, cysteine 320–cysteine 342, and cysteine 322–cysteine 334. N-linked (GlcNAc...) asparagine glycans are attached at residues asparagine 365 and asparagine 392. Residues leucine 428–leucine 448 form a helical membrane-spanning segment. A GAS motif; ion selectivity filter motif is present at residues glycine 441–serine 443. Topologically, residues glutamate 449–cysteine 512 are cytoplasmic.

Belongs to the amiloride-sensitive sodium channel (TC 1.A.6) family. ASIC2 subfamily. In terms of assembly, can form homotrimers. Heterotrimer; forms functional heterotrimers producing channel with different properties. Forms heterotrimers with ASIC1; while ASIC1 determines current amplitude, ASIC2 influences the properties of the current. Forms heterotrimers with ASIC3; resulting in channels with distinct properties. Interacts with STOM; STOM regulates the gating of ASIC2-containing channels. Interacts with PICK1; promotes ASIC3 phosphorylation by PKC and activation of ASIC2/ASIC3 heterotrimers. Expressed by sensory neurons. Expressed by nociceptive sensory neurons, spiral ganglion (SG) neurons and the retina (at protein level). Expressed in outer nuclear layer of retina (photoreceptors) and to a lower extent in distal and proximal inner nuclear layer.

The protein localises to the cell membrane. The enzyme catalyses Na(+)(in) = Na(+)(out). It carries out the reaction K(+)(in) = K(+)(out). It catalyses the reaction Li(+)(in) = Li(+)(out). Inhibited by the diuretic drug amiloride. Forms pH-gated trimeric sodium channels that act as postsynaptic excitatory sensors in the nervous system. Upon extracellular acidification, these channels generate rapid, transient inward currents that fully desensitize. Highly selective for sodium, they are permeable to other cations. By forming heterotrimeric channels with ASIC1, could contribute to synaptic plasticity, learning, and memory. Additionally, as acid sensors at nerve terminals, plays a role in mechanosensation and phototransduction. In terms of biological role, has no pH-gated sodium channel activity per se but can associate with other ASICs to produce functional channels with specific properties. This chain is Acid-sensing ion channel 2, found in Mus musculus (Mouse).